Consider the following 552-residue polypeptide: (R)-mandelonitrile lyase-like (552 aa).

Residues 1-28 form the signal peptide; the sequence is MTKRIDSSLLYTALVVLLLLGVVHRSNA. Asn-44 carries N-linked (GlcNAc...) asparagine glycosylation. An FAD-binding site is contributed by 55-82; the sequence is DYIIVGGGTAGCPLAATLSQSFRVLLLE. Residues Asn-162, Asn-259, and Asn-434 are each glycosylated (N-linked (GlcNAc...) asparagine). His-492 (proton acceptor) is an active-site residue.

It belongs to the GMC oxidoreductase family. In terms of assembly, monomer. It depends on FAD as a cofactor. Post-translationally, glycosylated.

It carries out the reaction (R)-mandelonitrile = benzaldehyde + hydrogen cyanide. The polypeptide is (R)-mandelonitrile lyase-like (Arabidopsis thaliana (Mouse-ear cress)).